We begin with the raw amino-acid sequence, 310 residues long: Methionyl-tRNA formyltransferase (310 aa).

109 to 112 (SLLP) provides a ligand contact to (6S)-5,6,7,8-tetrahydrofolate.

This sequence belongs to the Fmt family.

It catalyses the reaction L-methionyl-tRNA(fMet) + (6R)-10-formyltetrahydrofolate = N-formyl-L-methionyl-tRNA(fMet) + (6S)-5,6,7,8-tetrahydrofolate + H(+). Its function is as follows. Attaches a formyl group to the free amino group of methionyl-tRNA(fMet). The formyl group appears to play a dual role in the initiator identity of N-formylmethionyl-tRNA by promoting its recognition by IF2 and preventing the misappropriation of this tRNA by the elongation apparatus. The polypeptide is Methionyl-tRNA formyltransferase (Parvibaculum lavamentivorans (strain DS-1 / DSM 13023 / NCIMB 13966)).